The chain runs to 740 residues: Cell death abnormality protein 12 (740 aa).

The ELMO domain occupies 348–494 (SEIQKVLDID…FVLEQLRHVL (147 aa)). The segment at 555–690 (INHLNYLKKG…ESLAYLVGNT (136 aa)) is required for punctate localization, cell corpse engulfment and distal cell tip migration. The SH3-binding signature appears at 724 to 727 (PDVP).

In terms of assembly, interacts with psr-1. Forms a ternary complex with ced-2 and ced-5.

Its subcellular location is the cytoplasm. Its function is as follows. Involved in apoptosis and necrosis. Required for the cell corpse engulfment process. Has roles in the formation of actin halos and distal tip cell migration. Plays no role in amphid axon outgrowth. This is Cell death abnormality protein 12 from Caenorhabditis briggsae.